The chain runs to 675 residues: DNA ligase (675 aa).

Residues 33–37 (DAEYD), 82–83 (SL), and glutamate 114 each bind NAD(+). Residue lysine 116 is the N6-AMP-lysine intermediate of the active site. Residues arginine 137, glutamate 174, lysine 291, and lysine 315 each contribute to the NAD(+) site. Residues cysteine 409, cysteine 412, cysteine 427, and cysteine 433 each contribute to the Zn(2+) site. A BRCT domain is found at 595 to 675 (AGDNPFAGKT…EMIRLLDQSK (81 aa)).

Belongs to the NAD-dependent DNA ligase family. LigA subfamily. It depends on Mg(2+) as a cofactor. Mn(2+) serves as cofactor.

It catalyses the reaction NAD(+) + (deoxyribonucleotide)n-3'-hydroxyl + 5'-phospho-(deoxyribonucleotide)m = (deoxyribonucleotide)n+m + AMP + beta-nicotinamide D-nucleotide.. Functionally, DNA ligase that catalyzes the formation of phosphodiester linkages between 5'-phosphoryl and 3'-hydroxyl groups in double-stranded DNA using NAD as a coenzyme and as the energy source for the reaction. It is essential for DNA replication and repair of damaged DNA. The protein is DNA ligase of Proteus mirabilis (strain HI4320).